The chain runs to 345 residues: tRNA-dihydrouridine(20/20a) synthase (345 aa).

Residues 26 to 28 and Gln-78 contribute to the FMN site; that span reads PML. Cys-108 serves as the catalytic Proton donor. Residues Lys-147, His-180, 220 to 222, and 242 to 243 contribute to the FMN site; these read NGG and GR.

This sequence belongs to the Dus family. DusA subfamily. Requires FMN as cofactor.

It carries out the reaction 5,6-dihydrouridine(20) in tRNA + NADP(+) = uridine(20) in tRNA + NADPH + H(+). The catalysed reaction is 5,6-dihydrouridine(20) in tRNA + NAD(+) = uridine(20) in tRNA + NADH + H(+). The enzyme catalyses 5,6-dihydrouridine(20a) in tRNA + NADP(+) = uridine(20a) in tRNA + NADPH + H(+). It catalyses the reaction 5,6-dihydrouridine(20a) in tRNA + NAD(+) = uridine(20a) in tRNA + NADH + H(+). Catalyzes the synthesis of 5,6-dihydrouridine (D), a modified base found in the D-loop of most tRNAs, via the reduction of the C5-C6 double bond in target uridines. Specifically modifies U20 and U20a in tRNAs. In Yersinia pestis, this protein is tRNA-dihydrouridine(20/20a) synthase.